Reading from the N-terminus, the 380-residue chain is Cytochrome b (380 aa).

4 helical membrane passes run 33–53, 77–98, 113–133, and 178–198; these read FGSL…FLAM, WLIR…YLHV, WNIG…GYVL, and FFAF…LHLL. Histidine 83 and histidine 97 together coordinate heme b. Heme b contacts are provided by histidine 182 and histidine 196. An a ubiquinone-binding site is contributed by histidine 201. 4 helical membrane-spanning segments follow: residues 226-246, 288-308, 320-340, and 347-367; these read YKDL…TLFS, LGGV…PLLH, LTQI…WIGG, and FITV…ILIP.

Belongs to the cytochrome b family. The cytochrome bc1 complex contains 3 respiratory subunits (MT-CYB, CYC1 and UQCRFS1), 2 core proteins (UQCRC1 and UQCRC2) and probably 6 low-molecular weight proteins. It depends on heme b as a cofactor.

The protein localises to the mitochondrion inner membrane. Functionally, component of the ubiquinol-cytochrome c reductase complex (complex III or cytochrome b-c1 complex) that is part of the mitochondrial respiratory chain. The b-c1 complex mediates electron transfer from ubiquinol to cytochrome c. Contributes to the generation of a proton gradient across the mitochondrial membrane that is then used for ATP synthesis. The protein is Cytochrome b (mt-cyb) of Allocyttus niger (Black oreo dory).